A 234-amino-acid chain; its full sequence is UPF0502 protein Bphy_5360 (234 aa).

This sequence belongs to the UPF0502 family.

This chain is UPF0502 protein Bphy_5360, found in Paraburkholderia phymatum (strain DSM 17167 / CIP 108236 / LMG 21445 / STM815) (Burkholderia phymatum).